Reading from the N-terminus, the 203-residue chain is Holliday junction branch migration complex subunit RuvA (203 aa).

The segment at 1-64 (MIGRLRGIII…EDAQLLYGFN (64 aa)) is domain I. A domain II region spans residues 65-142 (NKQERTLFKE…KGLHGDLFTP (78 aa)). Residues 143-154 (AADLVLTSPASP) are flexible linker. Residues 155-203 (ATDDAEQEAVAALVALGYKPQEASRMVSKIARPDASSETLIREALRAAL) are domain III.

The protein belongs to the RuvA family. In terms of assembly, homotetramer. Forms an RuvA(8)-RuvB(12)-Holliday junction (HJ) complex. HJ DNA is sandwiched between 2 RuvA tetramers; dsDNA enters through RuvA and exits via RuvB. An RuvB hexamer assembles on each DNA strand where it exits the tetramer. Each RuvB hexamer is contacted by two RuvA subunits (via domain III) on 2 adjacent RuvB subunits; this complex drives branch migration. In the full resolvosome a probable DNA-RuvA(4)-RuvB(12)-RuvC(2) complex forms which resolves the HJ.

It localises to the cytoplasm. Functionally, the RuvA-RuvB-RuvC complex processes Holliday junction (HJ) DNA during genetic recombination and DNA repair, while the RuvA-RuvB complex plays an important role in the rescue of blocked DNA replication forks via replication fork reversal (RFR). RuvA specifically binds to HJ cruciform DNA, conferring on it an open structure. The RuvB hexamer acts as an ATP-dependent pump, pulling dsDNA into and through the RuvAB complex. HJ branch migration allows RuvC to scan DNA until it finds its consensus sequence, where it cleaves and resolves the cruciform DNA. In Shigella boydii serotype 18 (strain CDC 3083-94 / BS512), this protein is Holliday junction branch migration complex subunit RuvA.